Reading from the N-terminus, the 171-residue chain is bZIP transcription factor 2 (171 aa).

Residues 1–24 (MASSSSTYRSSSSSDGGNNNPSDS) are compositionally biased toward low complexity. Positions 1-54 (MASSSSTYRSSSSSDGGNNNPSDSVVTVDERKRKRMLSNRESARRSRMRKQKHV) are disordered. The 64-residue stretch at 29-92 (DERKRKRMLS…MKIQAENSVL (64 aa)) folds into the bZIP domain. The tract at residues 31–52 (RKRKRMLSNRESARRSRMRKQK) is basic motif. The interval 57–71 (LTAQINQLSNDNRQI) is leucine-zipper.

As to quaternary structure, forms heterodimers with BZIP9, BZIP10, BZIP25 and BZIP63. Component of a ternary complex composed of BZIP2-BZIP63 heterodimer and KIN10.

It localises to the nucleus. In terms of biological role, transcription factor that binds to specific DNA sequences in target gene promoters. BZIP2-BZIP63-KIN10 complex binds to the ETFQO promoter to up-regulate its transcription. The polypeptide is bZIP transcription factor 2 (Arabidopsis thaliana (Mouse-ear cress)).